The chain runs to 436 residues: 5-methylthioadenosine/S-adenosylhomocysteine deaminase (436 aa).

The Zn(2+) site is built by His-66 and His-68. 4 residues coordinate substrate: Glu-95, Arg-147, Arg-161, and His-187. Zn(2+) is bound at residue His-214. Positions 217 and 303 each coordinate substrate. Asp-303 is a Zn(2+) binding site.

The protein belongs to the metallo-dependent hydrolases superfamily. MTA/SAH deaminase family. Requires Zn(2+) as cofactor.

The enzyme catalyses S-adenosyl-L-homocysteine + H2O + H(+) = S-inosyl-L-homocysteine + NH4(+). It carries out the reaction S-methyl-5'-thioadenosine + H2O + H(+) = S-methyl-5'-thioinosine + NH4(+). Functionally, catalyzes the deamination of 5-methylthioadenosine and S-adenosyl-L-homocysteine into 5-methylthioinosine and S-inosyl-L-homocysteine, respectively. Is also able to deaminate adenosine. In Symbiobacterium thermophilum (strain DSM 24528 / JCM 14929 / IAM 14863 / T), this protein is 5-methylthioadenosine/S-adenosylhomocysteine deaminase.